Reading from the N-terminus, the 54-residue chain is Large ribosomal subunit protein bL32c (54 aa).

A compositionally biased stretch (basic residues) spans 1–20; sequence MAVPKKRVSKSKRDMRKTTW. The interval 1-54 is disordered; the sequence is MAVPKKRVSKSKRDMRKTTWKNKASKEAKKALSLAKSVSTGKSKSKGFQIKSSN. Low complexity predominate over residues 31–42; that stretch reads ALSLAKSVSTGK.

The protein belongs to the bacterial ribosomal protein bL32 family.

It is found in the plastid. The protein resides in the chloroplast. The chain is Large ribosomal subunit protein bL32c from Chlorokybus atmophyticus (Soil alga).